The primary structure comprises 398 residues: Streptopain (398 aa).

Positions 1–27 are cleaved as a signal peptide; the sequence is MNKKKLGIRLLSLLALGGFVLANPVFA. The propeptide occupies 28–145; it reads DQNFARNEKE…TTYAGTAEIK (118 aa). Catalysis depends on C192, which acts as the Nucleophile. C192 carries the cysteine methyl disulfide; in zymogen form modification. Residues S282 and G339 each contribute to the a protein site. The active-site Proton acceptor is the H340. Positions 368 to 390 are C-terminal active site loop; that stretch reads RLDALNPSALGTGGGAGGFNGYQ.

It belongs to the peptidase C10 family. In terms of assembly, monomer. The mature protease is derived from the precursor sequence by cleavage, either in cis via an autocatalytic mechanism, or in trans by mature SpeB or host proteases (trypsin, plasmin or subtilisin). Maturation can involve a number of protein cleavage intermediates. Mature SpeB probably plays the most important role in protein maturation in physiological conditions. Post-translationally, methylthiolation at Cys-192 of the inactive zymogen form is probably involved in the mechanism of secretion of the proteinase into the culture fluid.

It localises to the secreted. Its subcellular location is the host extracellular space. The protein resides in the host cytoplasm. The enzyme catalyses Preferential cleavage with hydrophobic residues at P2, P1 and P1'.. Synthesized as an inactive zymogen to protect the intracellular components of the bacteria from proteolytic activity during protein production. Once secreted into the extracellular milieu, cleaved into the active protease: maturation can be mediated in cis by autocatalytic cleavage, or in trans by mature SpeB or host proteases. Protease activity is strongly inhibited by zinc and copper, which prevent its maturation into an active protease: inhibition by metal ions may be required to prevent proteolysis of streptococcal proteins. Its function is as follows. Cysteine protease that acts as a key streptococcal virulence factor by cleaving host proteins involved in immune response. Triggers inflammation by mediating cleavage of host proteins, which can both promote host pathogenesis by triggering sterile inflammation and/or restrict streptococcal infection, depending on host immune statue and infection site. Cleaves host gasdermin-A (GSDMA) in epithelial cells, promoting GSDMA activation and formation of gasdermin pores, triggering pyroptosis. Pyroptosis triggers the elimination of the infected skin cell, depriving the pathogen of its protective niche, while inducing an inflammatory response. This ultimately prevents bacterial penetration of the epithelial barrier and a subsequent systemic dissemination of the pathogen. Also mediates cleavage of the cytokine precursor interleukin-1 beta (IL1B) to its mature form, resulting in inflammation and septic shock. SpeB-mediated maturation of IL1B plays a dual role depending on infection site: while IL1B inflammatory response prevents bacterial growth during invasive skin infections, it promotes streptococcal infection of the nasopharynx by disrupting colonization resistance mediated by the microbiota. Inhibits host autophagy be catalyzing cleavage and inactivation of key autophagy factors, such as CALCOCO2, NBR1 and SQSTM1. Cleaves and inhibits a number of complement factors, such as C2, C3-beta chain of C3, C4, C5 or SERPING1, thereby promoting evasion of host immunity. May also impair adaptive immunity by catalyzing cleavage and degradation of host immunoglobulins to promote immune system evasion; the relevance of this activity is however unsure in vivo. Catalyzes maturation and release of the peptide hormone bradykinin from the precursor Kininogen-1 (KNG1) to produce hypotension during septic shock. Also involved in bacterial translocation across the host epithelial barrier by mediating cleavage and degradation of host epithelial junction proteins, such as CDH1 and OCLN. Additionally, has been involved in degradation of fibronectin and vitronectin, two host extracellular matrix proteins involved in tissue integrity. Also able to catalyze cleavage and degradation of streptococcal proteins, such as C5a peptidase, EndoS or SmeZ. Degradation of streptococcal proteins is however strictly regulated to preserve integrity of other virulence factors. The sequence is that of Streptopain (speB) from Streptococcus pyogenes serotype M3 (strain ATCC BAA-595 / MGAS315).